The chain runs to 203 residues: A-type ATP synthase subunit E (203 aa).

The protein belongs to the V-ATPase E subunit family. As to quaternary structure, might form a homodimer. Interacts with subunit H via residues 41-60. The A-type ATPase is composed of subunits A(3), B(3), C, D, E(1 or 2), F, H(2), I and K(x).

It localises to the cell membrane. Its function is as follows. Component of the A-type ATP synthase that produces ATP from ADP in the presence of a proton gradient across the membrane. The sequence is that of A-type ATP synthase subunit E from Methanocaldococcus jannaschii (strain ATCC 43067 / DSM 2661 / JAL-1 / JCM 10045 / NBRC 100440) (Methanococcus jannaschii).